We begin with the raw amino-acid sequence, 308 residues long: 3'(2'),5'-bisphosphate nucleotidase 1 (308 aa).

Position 2 is an N-acetylalanine (Ala2). Asp51 functions as the Proton acceptor in the catalytic mechanism. Mg(2+) is bound by residues Glu74, Asp117, Leu119, and Asp120. Residue Thr122 is the Proton acceptor of the active site. At Thr122 the chain carries Phosphothreonine. 4 residues coordinate AMP: Thr195, His198, Gly220, and Lys224. Phosphoserine is present on Ser240. The residue at position 244 (Lys244) is an N6-succinyllysine. Asp247 contacts Mg(2+).

It belongs to the inositol monophosphatase superfamily. Mg(2+) serves as cofactor. In terms of tissue distribution, highly expressed in kidney, liver, pancreas and heart. Detected at lower levels in brain, placenta, lung and skeletal muscle.

It carries out the reaction adenosine 3',5'-bisphosphate + H2O = AMP + phosphate. The enzyme catalyses adenosine 2',5'-bisphosphate + H2O = AMP + phosphate. The catalysed reaction is 3'-phosphoadenylyl sulfate + H2O = adenosine 5'-phosphosulfate + phosphate. It catalyses the reaction 1D-myo-inositol 1,4-bisphosphate + H2O = 1D-myo-inositol 4-phosphate + phosphate. It carries out the reaction 1D-myo-inositol 1,3,4-trisphosphate + H2O = 1D-myo-inositol 3,4-bisphosphate + phosphate. With respect to regulation, is very sensitive to inhibition by Li(+) (IC(50)=0.3 mM for hydrolysis of PAP; IC(50)=0.6 mM for hydrolysis of inositol-1,4-bis-phosphate). Is not affected by high Na(+) concentrations. In terms of biological role, phosphatase that converts 3'(2')-phosphoadenosine 5'-phosphate (PAP) to AMP and inositol 1,4-bisphosphate (Ins(1,4)P2) to inositol 4-phosphate. Is also able to hydrolyze adenosine 3'-phosphate 5'-phosphosulfate (PAPS) to adenosine 5'-phosphosulfate (APS). Probably prevents the toxic accumulation of PAP, a compound which inhibits a variety of proteins, including PAPS-utilizing enzymes such as sulfotransferases, and RNA processing enzymes. Could also play a role in inositol recycling and phosphoinositide metabolism. Is not active on 3'-AMP, inositol-1-phosphate and inositol-1,4,5-triphosphate. The sequence is that of 3'(2'),5'-bisphosphate nucleotidase 1 (BPNT1) from Homo sapiens (Human).